We begin with the raw amino-acid sequence, 294 residues long: NAD kinase (294 aa).

D74 acts as the Proton acceptor in catalysis. NAD(+) is bound by residues D74–G75, N148–E149, H159, R176, D178, T189–S194, and Q249.

The protein belongs to the NAD kinase family. The cofactor is a divalent metal cation.

The protein localises to the cytoplasm. It carries out the reaction NAD(+) + ATP = ADP + NADP(+) + H(+). Functionally, involved in the regulation of the intracellular balance of NAD and NADP, and is a key enzyme in the biosynthesis of NADP. Catalyzes specifically the phosphorylation on 2'-hydroxyl of the adenosine moiety of NAD to yield NADP. This is NAD kinase from Vibrio campbellii (strain ATCC BAA-1116).